We begin with the raw amino-acid sequence, 503 residues long: Capsanthin/capsorubin synthase, chromoplastic (503 aa).

Residue Val-88–Pro-117 participates in NAD(+) binding.

It belongs to the lycopene cyclase family.

It localises to the plastid. The protein resides in the chromoplast. It catalyses the reaction all-trans-violaxanthin = all-trans-capsorubin. The catalysed reaction is all-trans-antheraxanthin = all-trans-capsanthin. The protein operates within carotenoid biosynthesis; capsanthin biosynthesis; capsanthin from antheraxanthin: step 1/1. It functions in the pathway carotenoid biosynthesis; capsorubin biosynthesis; capsorubin from violaxanthin: step 1/1. Functionally, catalyzes the conversion of the ubiquitous 5,6-epoxycarotenoids, antheraxanthin and violaxanthin, into capsanthin and capsorubin, respectively. The chain is Capsanthin/capsorubin synthase, chromoplastic (CCS) from Citrus sinensis (Sweet orange).